The primary structure comprises 345 residues: Solute carrier family 25 member 43 (345 aa).

3 Solcar repeats span residues 11–100 (TSSQ…IDEL), 104–195 (SQWR…QERH), and 199–297 (TSLQ…LYRN). Transmembrane regions (helical) follow at residues 16-36 (LMCV…LEVV), 67-87 (FWKG…IHLA), 109-129 (IVAG…LEVV), 165-185 (GFSL…AVYI), 204-224 (FING…FETV), and 261-281 (VMAL…YFGL).

The protein belongs to the mitochondrial carrier (TC 2.A.29) family.

It localises to the mitochondrion inner membrane. This chain is Solute carrier family 25 member 43 (slc25a43), found in Danio rerio (Zebrafish).